The following is a 435-amino-acid chain: Mitochondrial association factor 1 form a1 (435 aa).

The N-terminal stretch at 1 to 20 (MWRIWRCRLSFLFATGCLLG) is a signal peptide. Residues 21–95 (ALTAGLGSQM…SVTARRRRNR (75 aa)) lie on the Vacuolar side of the membrane. Residues 43-88 (GVADASQEAGDVVEERTERTEEQVFAPGPPRRHSSESLFPRNASVT) form a disordered region. Over residues 55–64 (VEERTERTEE) the composition is skewed to basic and acidic residues. A helical transmembrane segment spans residues 96–116 (RIAPIATAVGVAVILAALYVL). Residues 117–435 (RRRRAQPPQE…ERKYKFPQGD (319 aa)) are Cytoplasmic-facing. Residues 120 to 162 (RAQPPQEPEPPTRLRTPRPRAPSEQQQPSESEPPAEVPMTPDP) form a disordered region. Over residues 141–153 (PSEQQQPSESEPP) the composition is skewed to low complexity.

As to quaternary structure, interacts with host SAMM50.

The protein localises to the parasitophorous vacuole membrane. In terms of biological role, during host cell infection by tachyzoites, does not play a role in tethering the parasitophorous vacuole to the host mitochondria, probably because it does not bind host mitochondrial import protein TOMM70. This is Mitochondrial association factor 1 form a1 from Toxoplasma gondii.